The following is a 174-amino-acid chain: ATP-dependent protease subunit HslV (174 aa).

The active site involves threonine 2. Na(+) contacts are provided by glycine 159, aspartate 162, and threonine 165.

This sequence belongs to the peptidase T1B family. HslV subfamily. A double ring-shaped homohexamer of HslV is capped on each side by a ring-shaped HslU homohexamer. The assembly of the HslU/HslV complex is dependent on binding of ATP.

The protein localises to the cytoplasm. The catalysed reaction is ATP-dependent cleavage of peptide bonds with broad specificity.. With respect to regulation, allosterically activated by HslU binding. Protease subunit of a proteasome-like degradation complex believed to be a general protein degrading machinery. The protein is ATP-dependent protease subunit HslV of Lacticaseibacillus casei (strain BL23) (Lactobacillus casei).